The chain runs to 448 residues: Phosphoglucosamine mutase (448 aa).

The active-site Phosphoserine intermediate is S100. Mg(2+) is bound by residues S100, D240, D242, and D244. Position 100 is a phosphoserine (S100).

This sequence belongs to the phosphohexose mutase family. Mg(2+) is required as a cofactor. Post-translationally, activated by phosphorylation.

The catalysed reaction is alpha-D-glucosamine 1-phosphate = D-glucosamine 6-phosphate. Catalyzes the conversion of glucosamine-6-phosphate to glucosamine-1-phosphate. The chain is Phosphoglucosamine mutase from Bacillus cereus (strain B4264).